The chain runs to 137 residues: Holo-[acyl-carrier-protein] synthase (137 aa).

Positions 8 and 57 each coordinate Mg(2+).

It belongs to the P-Pant transferase superfamily. AcpS family. Mg(2+) serves as cofactor.

The protein resides in the cytoplasm. It carries out the reaction apo-[ACP] + CoA = holo-[ACP] + adenosine 3',5'-bisphosphate + H(+). Functionally, transfers the 4'-phosphopantetheine moiety from coenzyme A to a Ser of acyl-carrier-protein. The chain is Holo-[acyl-carrier-protein] synthase from Cereibacter sphaeroides (strain ATCC 17025 / ATH 2.4.3) (Rhodobacter sphaeroides).